We begin with the raw amino-acid sequence, 331 residues long: Isopenicillin N synthase (331 aa).

Isopenicillin N is bound by residues R87, Y91, S183, and Y189. R87, Y91, S183, Y189, H214, and D216 together coordinate N-[(5S)-5-amino-5-carboxypentanoyl]-L-cysteinyl-D-valine. The Fe2OG dioxygenase domain occupies 176–288 (KPDDTLASVV…RQSLPFFVNL (113 aa)). Residues H214, D216, and H270 each coordinate Fe(2+). R279 serves as a coordination point for 2-oxoglutarate. An isopenicillin N-binding site is contributed by S281. Residue S281 participates in N-[(5S)-5-amino-5-carboxypentanoyl]-L-cysteinyl-D-valine binding.

This sequence belongs to the iron/ascorbate-dependent oxidoreductase family. Monomer. It depends on Fe(2+) as a cofactor.

Its subcellular location is the cytoplasm. It is found in the cytosol. The catalysed reaction is N-[(5S)-5-amino-5-carboxypentanoyl]-L-cysteinyl-D-valine + O2 = isopenicillin N + 2 H2O. Its pathway is antibiotic biosynthesis; penicillin G biosynthesis; penicillin G from L-alpha-aminoadipate and L-cysteine and L-valine: step 2/3. Isopenicillin N synthase; part of the gene cluster that mediates the biosynthesis of penicillin, the world's most important antibiotic. IpnA catalyzes the cyclization of the tripeptide N-[(5S)-5-amino-5-carboxypentanoyl]-L-cysteinyl-D-valine (LLD-ACV or ACV) to form isopenicillin N (IPN) that contains the beta-lactam nucleus. The penicillin biosynthesis occurs via 3 enzymatic steps, the first corresponding to the production of the tripeptide N-[(5S)-5-amino-5-carboxypentanoyl]-L-cysteinyl-D-valine (LLD-ACV or ACV) by the NRPS acvA. The tripeptide ACV is then cyclized to isopenicillin N (IPN) by the isopenicillin N synthase ipnA that forms the beta-lactam nucleus. Finally, the alpha-aminoadipyl side chain is exchanged for phenylacetic acid by the isopenicillin N acyltransferase penDE to yield penicillin in the peroxisomal matrix. This is Isopenicillin N synthase from Emericella nidulans (strain FGSC A4 / ATCC 38163 / CBS 112.46 / NRRL 194 / M139) (Aspergillus nidulans).